We begin with the raw amino-acid sequence, 458 residues long: Probable M18 family aminopeptidase 1 (458 aa).

Positions 95, 170, and 434 each coordinate Zn(2+).

Belongs to the peptidase M18 family. Zn(2+) is required as a cofactor.

The protein is Probable M18 family aminopeptidase 1 of Borrelia garinii subsp. bavariensis (strain ATCC BAA-2496 / DSM 23469 / PBi) (Borreliella bavariensis).